The primary structure comprises 154 residues: MVLSDAEWQLVLNIWAKVEADVAGHGQDILIRLFKGHPETLEKFDKFKHLKTEAEMKASEDLKKHGNTVLTALGGILKKKGHHEAELKPLAQSHATKHKIPIKYLEFISDAIIHVLHSRHPADFGADAQAAMNKALELFRKDIAAKYKELGFQG.

The region spanning 2-148 (VLSDAEWQLV…FRKDIAAKYK (147 aa)) is the Globin domain. Phosphoserine is present on serine 4. Histidine 65 is a binding site for nitrite. Residue histidine 65 participates in O2 binding. Phosphothreonine is present on threonine 68. Histidine 94 is a binding site for heme b.

The protein belongs to the globin family. Monomeric.

It is found in the cytoplasm. The protein localises to the sarcoplasm. The catalysed reaction is Fe(III)-heme b-[protein] + nitric oxide + H2O = Fe(II)-heme b-[protein] + nitrite + 2 H(+). The enzyme catalyses H2O2 + AH2 = A + 2 H2O. In terms of biological role, monomeric heme protein which primary function is to store oxygen and facilitate its diffusion within muscle tissues. Reversibly binds oxygen through a pentacoordinated heme iron and enables its timely and efficient release as needed during periods of heightened demand. Depending on the oxidative conditions of tissues and cells, and in addition to its ability to bind oxygen, it also has a nitrite reductase activity whereby it regulates the production of bioactive nitric oxide. Under stress conditions, like hypoxia and anoxia, it also protects cells against reactive oxygen species thanks to its pseudoperoxidase activity. The polypeptide is Myoglobin (MB) (Megaptera novaeangliae (Humpback whale)).